We begin with the raw amino-acid sequence, 139 residues long: Histone H2B (139 aa).

Residues Met-1–Pro-10 show a composition bias toward basic and acidic residues. The disordered stretch occupies residues Met-1–Lys-47. 2 positions are modified to N6-acetyllysine; alternate: Lys-8 and Lys-9. Residues Lys-8 and Lys-9 each participate in a glycyl lysine isopeptide (Lys-Gly) (interchain with G-Cter in SUMO); alternate cross-link. N6-acetyllysine is present on Lys-15. At Lys-25 the chain carries N6-acetyllysine; alternate. Lys-25 is covalently cross-linked (Glycyl lysine isopeptide (Lys-Gly) (interchain with G-Cter in SUMO); alternate). A Glycyl lysine isopeptide (Lys-Gly) (interchain with G-Cter in SUMO) cross-link involves residue Lys-26. Lys-133 is covalently cross-linked (Glycyl lysine isopeptide (Lys-Gly) (interchain with G-Cter in ubiquitin)).

This sequence belongs to the histone H2B family. In terms of assembly, the nucleosome is a histone octamer containing two molecules each of H2A, H2B, H3 and H4 assembled in one H3-H4 heterotetramer and two H2A-H2B heterodimers. The octamer wraps approximately 147 bp of DNA. In terms of processing, monoubiquitinated by the UBC2-BRE1 complex to form H2BK123ub1. H2BK123ub1 gives a specific tag for epigenetic transcriptional activation and is also prerequisite for H3K4me and H3K79me formation. H2BK123ub1 also modulates the formation of double-strand breaks during meiosis and is a prerequisite for DNA-damage checkpoint activation. Acetylated by GCN5 to form H2BK11ac and H2BK16ac. H2BK16ac can also be formed by ESA1. Acetylation of N-terminal lysines and particularly formation of H2BK11acK16ac has a positive effect on transcription. Post-translationally, sumoylation to form H2BK6su or H2BK7su, and probably also H2BK16su or H2BK17su, occurs preferentially near the telomeres and represses gene transcription.

The protein localises to the nucleus. The protein resides in the chromosome. Core component of nucleosome. Nucleosomes wrap and compact DNA into chromatin, limiting DNA accessibility to the cellular machineries which require DNA as a template. Histones thereby play a central role in transcription regulation, DNA repair, DNA replication and chromosomal stability. DNA accessibility is regulated via a complex set of post-translational modifications of histones, also called histone code, and nucleosome remodeling. This Yarrowia lipolytica (strain CLIB 122 / E 150) (Yeast) protein is Histone H2B (HTB1).